The chain runs to 443 residues: uncharacterized protein (443 aa).

This is an uncharacterized protein from Saccharomyces cerevisiae (strain ATCC 204508 / S288c) (Baker's yeast).